The following is a 1133-amino-acid chain: Protein TPR3 (1133 aa).

Residues L4 to F36 enclose the LisH domain. One can recognise a CTLH domain in the interval F34–K92. Residues P287–R307 are disordered. WD repeat units lie at residues S348–L388, D410–Q449, A455–T496, G499–D540, A543–T586, F590–T629, G634–R673, M771–S810, N837–T875, P878–K918, G921–S960, and E1014–R1053. The disordered stretch occupies residues E1099 to R1133. Positions N1112–R1133 are enriched in polar residues.

Tetramer. Interacts with D53. Interacts with MODD and HDAC1. Interacts with WOX1. Interacts with MOF1. In terms of tissue distribution, expressed in panicles, stems, leaves, spikelets and seed endosperm.

Probable downstream regulator of strigolactones signaling. Functions in a complex with MODD and HDAC1 to down-regulate the histone acetylation level at BZIP46 target genes. BZIP46 is a positive regulator of abscisic acid (ABA) signaling and drought stress tolerance. The chain is Protein TPR3 from Oryza sativa subsp. japonica (Rice).